The chain runs to 587 residues: Phosphatidylinositol-3-phosphatase SAC1 (587 aa).

Over 1–520 (MAATTYERLK…SPLSVPRDLK (520 aa)) the chain is Cytoplasmic. The SAC domain maps to 122-451 (MNHVLSMDGF…ANACAKQYAG (330 aa)). Positions 452–587 (TGALKTDFTR…PRLVQKEKID (136 aa)) are essential for phosphatidylinositol-4-phosphate phosphatase activity. Position 456 is an N6-acetyllysine (Lys456). Residues 521–541 (FLALPIIMVVAFSMCIICLLM) form a helical membrane-spanning segment. Residues 542–548 (AGDTWTE) lie on the Lumenal side of the membrane. Residues 549-569 (TLAYVLFWGVASIGTFFIILY) form a helical membrane-spanning segment. Residues 570-587 (NGKDFVDAPRLVQKEKID) are Cytoplasmic-facing.

As to quaternary structure, interacts with TMEM39A. Interacts with SEC23A and SEC24A; this interaction is reduced in the absence of TMEM39A. Interacts with PLEKHA3 and VAPA and/or VAPB to form a ternary complex.

The protein localises to the endoplasmic reticulum membrane. The protein resides in the golgi apparatus membrane. It catalyses the reaction a 1,2-diacyl-sn-glycero-3-phospho-(1D-myo-inositol-3-phosphate) + H2O = a 1,2-diacyl-sn-glycero-3-phospho-(1D-myo-inositol) + phosphate. The enzyme catalyses a 1,2-diacyl-sn-glycero-3-phospho-(1D-myo-inositol 4-phosphate) + H2O = a 1,2-diacyl-sn-glycero-3-phospho-(1D-myo-inositol) + phosphate. Functionally, phosphoinositide phosphatase which catalyzes the hydrolysis of phosphatidylinositol 4-phosphate (PtdIns(4)P), phosphatidylinositol 3-phosphate (PtdIns(3)P) and has low activity towards phosphatidylinositol-3,5-bisphosphate (PtdIns(3,5)P2). Shows a very robust PtdIns(4)P phosphatase activity when it binds PtdIns(4)P in a 'cis' configuration in the cellular environment, with much less activity seen when it binds PtdIns(4)P in 'trans' configuration. PtdIns(4)P phosphatase activity (when it binds PtdIns(4)P in 'trans' configuration) is enhanced in the presence of PLEKHA3. This is Phosphatidylinositol-3-phosphatase SAC1 (SACM1L) from Bos taurus (Bovine).